Consider the following 398-residue polypeptide: Exodeoxyribonuclease 7 large subunit (398 aa).

Belongs to the XseA family. Heterooligomer composed of large and small subunits.

The protein localises to the cytoplasm. The catalysed reaction is Exonucleolytic cleavage in either 5'- to 3'- or 3'- to 5'-direction to yield nucleoside 5'-phosphates.. Its function is as follows. Bidirectionally degrades single-stranded DNA into large acid-insoluble oligonucleotides, which are then degraded further into small acid-soluble oligonucleotides. The polypeptide is Exodeoxyribonuclease 7 large subunit (Anaplasma phagocytophilum (strain HZ)).